The sequence spans 304 residues: Ribonuclease Z (304 aa).

Zn(2+)-binding residues include His63, His65, Asp67, His68, His141, Asp208, and His266. Residue Asp67 is the Proton acceptor of the active site.

The protein belongs to the RNase Z family. In terms of assembly, homodimer. Zn(2+) is required as a cofactor.

It catalyses the reaction Endonucleolytic cleavage of RNA, removing extra 3' nucleotides from tRNA precursor, generating 3' termini of tRNAs. A 3'-hydroxy group is left at the tRNA terminus and a 5'-phosphoryl group is left at the trailer molecule.. In terms of biological role, zinc phosphodiesterase, which displays some tRNA 3'-processing endonuclease activity. Probably involved in tRNA maturation, by removing a 3'-trailer from precursor tRNA. The polypeptide is Ribonuclease Z (Chlamydia muridarum (strain MoPn / Nigg)).